A 468-amino-acid polypeptide reads, in one-letter code: Neuronal acetylcholine receptor subunit alpha-5 (468 aa).

An N-terminal signal peptide occupies residues 1-22 (MATRGSGPRAPRLLLLVQLVAG). Over 23-254 (RCGLAGAAGG…VIKRLPLFYT (232 aa)) the chain is Extracellular. N-linked (GlcNAc...) asparagine glycosylation is found at asparagine 155, asparagine 183, and asparagine 229. Cysteine 170 and cysteine 184 form a disulfide bridge. Cysteine 234 and cysteine 235 are oxidised to a cystine. Helical transmembrane passes span 255–275 (LFLI…FYLP), 282–302 (ICLC…IEEI), and 317–337 (LVFT…AINI). Residues 338 to 429 (HHRSSSTHNA…WKFIAQVLDR (92 aa)) are Cytoplasmic-facing. The chain crosses the membrane as a helical span at residues 430–451 (MFLWTFLFVSIVGSLGLFVPVI). The Extracellular segment spans residues 452 to 468 (YKWANILIPVHIGNANK).

This sequence belongs to the ligand-gated ion channel (TC 1.A.9) family. Acetylcholine receptor (TC 1.A.9.1) subfamily. Alpha-5/CHRNA5 sub-subfamily. In terms of assembly, neuronal AChR that forms heteropentamers composed of two different type of subunits: alpha and non-alpha (beta). CHRNA5/alpha-5 subunit is only able to form functional nAChRs when co-assembled with another alpha subunit, can be combined to CHRNA4/alpha-4 or CHRNA3/alpha-3 and CHRNB4/beta-4 or CHRNB2/beta-2 to give rise to functional receptors. Interacts with LYPD6.

It localises to the synaptic cell membrane. Its subcellular location is the cell membrane. The enzyme catalyses Ca(2+)(in) = Ca(2+)(out). It catalyses the reaction K(+)(in) = K(+)(out). It carries out the reaction Na(+)(in) = Na(+)(out). With respect to regulation, activated by a myriad of ligands such as acetylcholine, cytisine, nicotine, choline and epibatidine. Component of neuronal acetylcholine receptors (nAChRs) that function as pentameric, ligand-gated cation channels with high calcium permeability among other activities. nAChRs are excitatory neurotrasnmitter receptors formed by a collection of nAChR subunits known to mediate synaptic transmission in the nervous system and the neuromuscular junction. Each nAchR subunit confers differential attributes to channel properties, including activation, deactivation and desensitization kinetics, pH sensitivity, cation permeability, and binding to allosteric modulators. Has an accessory rather than functional role and is only able to form functional nAChRs when co-assembled with another beta subunit. Participates in pentameric assemblies along with CHRNA3, CHRNA4, CHRNB2 and CHRNB4. Increases receptor sensitivity to acetylcholine and nicotine when associated with CHRNA4 and CHRNB2. Plays a role in nicotine addiction. This Pan troglodytes (Chimpanzee) protein is Neuronal acetylcholine receptor subunit alpha-5 (CHRNA5).